A 476-amino-acid polypeptide reads, in one-letter code: Zinc transporter SLC39A7 (476 aa).

The helical transmembrane segment at 7 to 27 (APHWVAVGLLTWAALGLLVAG) threads the bilayer. Residues 35–109 (HKDVEEDFHG…SHGHSHDSLH (75 aa)) show a composition bias toward basic and acidic residues. The interval 35 to 131 (HKDVEEDFHG…HGTSREAGAP (97 aa)) is disordered. His-73 is modified (pros-methylhistidine). Over residues 110 to 120 (HGGHGHAHREH) the composition is skewed to basic residues. The next 3 membrane-spanning stretches (helical) occupy residues 146–166 (ALGA…LIPV), 177–197 (LQIL…LHLI), and 222–242 (GPIL…LVVE). The tract at residues 249-320 (KGGHGHSHGH…QSPEEEKAGS (72 aa)) is disordered. Over residues 257-292 (GHGDRHAHGDSHTHGDRHECSSKEKPSTEEEKEVGG) the composition is skewed to basic and acidic residues. Phosphoserine is present on Ser-283. The next 2 membrane-spanning stretches (helical) occupy residues 393–413 (VTAI…GGAV) and 417–437 (VAGG…FIYV).

Belongs to the ZIP transporter (TC 2.A.5) family. KE4/Catsup subfamily. In terms of assembly, homodimer. Methylation at some His residue by METTL9 leads to reduced zinc-binding. In terms of processing, rapidly phosphorylated by CK2 following Zn(2+) treatment. This phosphorylation is required for efficient cytosolic Zn(2+) release. Widely expressed. Highly expressed in the intestinal crypts.

It localises to the endoplasmic reticulum membrane. Its subcellular location is the golgi apparatus. The protein resides in the cis-Golgi network membrane. It carries out the reaction Zn(2+)(in) = Zn(2+)(out). Its function is as follows. Transports Zn(2+) from the endoplasmic reticulum (ER)/Golgi apparatus to the cytosol, playing an essential role in the regulation of cytosolic zinc levels. Acts as a gatekeeper of zinc release from intracellular stores, requiring post-translational activation by phosphorylation, resulting in activation of multiple downstream pathways leading to cell growth and proliferation. Has an essential role in B cell development and is required for proper B cell receptor signaling. Plays an important role in maintaining intestinal epithelial homeostasis and skin dermis development by regulating ER function. Controls cell signaling pathways involved in glucose metabolism in skeletal muscle. Has a protective role against ER stress in different biological contexts. Mediates Zn(2+)-induced ferroptosis. This is Zinc transporter SLC39A7 (Slc39a7) from Mus musculus (Mouse).